We begin with the raw amino-acid sequence, 212 residues long: ATP-dependent dethiobiotin synthetase BioD (212 aa).

Residue 12-17 (DCGKTF) participates in ATP binding. Thr16 contacts Mg(2+). Lys33 is an active-site residue. Ser37 is a binding site for substrate. ATP is bound by residues Asp50, 110–113 (EGAG), and 170–171 (NC). Mg(2+) is bound by residues Asp50 and Glu110.

The protein belongs to the dethiobiotin synthetase family. As to quaternary structure, homodimer. The cofactor is Mg(2+).

It localises to the cytoplasm. The catalysed reaction is (7R,8S)-7,8-diammoniononanoate + CO2 + ATP = (4R,5S)-dethiobiotin + ADP + phosphate + 3 H(+). It participates in cofactor biosynthesis; biotin biosynthesis; biotin from 7,8-diaminononanoate: step 1/2. Catalyzes a mechanistically unusual reaction, the ATP-dependent insertion of CO2 between the N7 and N8 nitrogen atoms of 7,8-diaminopelargonic acid (DAPA, also called 7,8-diammoniononanoate) to form a ureido ring. This chain is ATP-dependent dethiobiotin synthetase BioD, found in Legionella pneumophila (strain Lens).